Reading from the N-terminus, the 264-residue chain is Thiazole synthase (264 aa).

The active-site Schiff-base intermediate with DXP is the Lys-104. Residues Gly-165, 191–192, and 213–214 contribute to the 1-deoxy-D-xylulose 5-phosphate site; these read AG and NT.

The protein belongs to the ThiG family. As to quaternary structure, homotetramer. Forms heterodimers with either ThiH or ThiS.

The protein localises to the cytoplasm. It carries out the reaction [ThiS sulfur-carrier protein]-C-terminal-Gly-aminoethanethioate + 2-iminoacetate + 1-deoxy-D-xylulose 5-phosphate = [ThiS sulfur-carrier protein]-C-terminal Gly-Gly + 2-[(2R,5Z)-2-carboxy-4-methylthiazol-5(2H)-ylidene]ethyl phosphate + 2 H2O + H(+). The protein operates within cofactor biosynthesis; thiamine diphosphate biosynthesis. Catalyzes the rearrangement of 1-deoxy-D-xylulose 5-phosphate (DXP) to produce the thiazole phosphate moiety of thiamine. Sulfur is provided by the thiocarboxylate moiety of the carrier protein ThiS. In vitro, sulfur can be provided by H(2)S. The polypeptide is Thiazole synthase (Oleidesulfovibrio alaskensis (strain ATCC BAA-1058 / DSM 17464 / G20) (Desulfovibrio alaskensis)).